Here is a 252-residue protein sequence, read N- to C-terminus: Triosephosphate isomerase (252 aa).

11–13 (NWK) serves as a coordination point for substrate. Residue histidine 97 is the Electrophile of the active site. Glutamate 169 functions as the Proton acceptor in the catalytic mechanism. Substrate-binding positions include glycine 175, serine 215, and 236-237 (GG).

Belongs to the triosephosphate isomerase family. As to quaternary structure, homodimer.

Its subcellular location is the cytoplasm. The enzyme catalyses D-glyceraldehyde 3-phosphate = dihydroxyacetone phosphate. It functions in the pathway carbohydrate biosynthesis; gluconeogenesis. Its pathway is carbohydrate degradation; glycolysis; D-glyceraldehyde 3-phosphate from glycerone phosphate: step 1/1. In terms of biological role, involved in the gluconeogenesis. Catalyzes stereospecifically the conversion of dihydroxyacetone phosphate (DHAP) to D-glyceraldehyde-3-phosphate (G3P). The chain is Triosephosphate isomerase from Mycoplasmoides gallisepticum (strain R(low / passage 15 / clone 2)) (Mycoplasma gallisepticum).